Consider the following 169-residue polypeptide: Crossover junction endodeoxyribonuclease RuvC (169 aa).

Active-site residues include Asp11, Glu71, and Asp143. Residues Asp11, Glu71, and Asp143 each contribute to the Mg(2+) site.

This sequence belongs to the RuvC family. In terms of assembly, homodimer which binds Holliday junction (HJ) DNA. The HJ becomes 2-fold symmetrical on binding to RuvC with unstacked arms; it has a different conformation from HJ DNA in complex with RuvA. In the full resolvosome a probable DNA-RuvA(4)-RuvB(12)-RuvC(2) complex forms which resolves the HJ. Mg(2+) is required as a cofactor.

The protein resides in the cytoplasm. The catalysed reaction is Endonucleolytic cleavage at a junction such as a reciprocal single-stranded crossover between two homologous DNA duplexes (Holliday junction).. The RuvA-RuvB-RuvC complex processes Holliday junction (HJ) DNA during genetic recombination and DNA repair. Endonuclease that resolves HJ intermediates. Cleaves cruciform DNA by making single-stranded nicks across the HJ at symmetrical positions within the homologous arms, yielding a 5'-phosphate and a 3'-hydroxyl group; requires a central core of homology in the junction. The consensus cleavage sequence is 5'-(A/T)TT(C/G)-3'. Cleavage occurs on the 3'-side of the TT dinucleotide at the point of strand exchange. HJ branch migration catalyzed by RuvA-RuvB allows RuvC to scan DNA until it finds its consensus sequence, where it cleaves and resolves the cruciform DNA. The chain is Crossover junction endodeoxyribonuclease RuvC from Rhizobium etli (strain ATCC 51251 / DSM 11541 / JCM 21823 / NBRC 15573 / CFN 42).